The following is a 221-amino-acid chain: UPF0758 protein YicR (221 aa).

The region spanning 99–221 (ALLSPEMTRE…YVSFAERGWI (123 aa)) is the MPN domain. Positions 170, 172, and 183 each coordinate Zn(2+). A JAMM motif motif is present at residues 170–183 (HNHPSGCAEPSKAD).

This sequence belongs to the UPF0758 family. YicR subfamily.

The sequence is that of UPF0758 protein YicR from Salmonella paratyphi A (strain ATCC 9150 / SARB42).